Here is a 147-residue protein sequence, read N- to C-terminus: Siroheme decarboxylase NirG subunit (147 aa).

Belongs to the Ahb/Nir family. Probably forms a complex composed of NirD, NirL, NirG and NirH. All proteins are required for the total conversion of siroheme to didecarboxysiroheme.

It catalyses the reaction siroheme + 2 H(+) = 12,18-didecarboxysiroheme + 2 CO2. It functions in the pathway porphyrin-containing compound metabolism. Functionally, involved in heme d1 biosynthesis. Catalyzes the decarboxylation of siroheme into didecarboxysiroheme. This is Siroheme decarboxylase NirG subunit from Pseudomonas aeruginosa (strain ATCC 15692 / DSM 22644 / CIP 104116 / JCM 14847 / LMG 12228 / 1C / PRS 101 / PAO1).